The chain runs to 596 residues: Jacalin-related lectin 46 (596 aa).

The tract at residues 1–20 is disordered; sequence MTERSEALGKDGNRRWDDKS. 4 consecutive Jacalin-type lectin domains span residues 2 to 143, 146 to 291, 294 to 439, and 446 to 592; these read TERS…YFTR, PTRI…YFTP, PTKS…HFYP, and AEKL…HVLP.

It belongs to the jacalin lectin family.

This chain is Jacalin-related lectin 46 (JAL46), found in Arabidopsis thaliana (Mouse-ear cress).